The following is a 582-amino-acid chain: MAPRKTVGILGGGQLGRMLTHPAALLGIPLLILDSGSYTPAKQTLLPPPPHSHPDGPFTSETHIRKLASACDILTVEIEHVNADVLEAVEKEGLCEVQPSPQTIRLIQNKYDQKKYLAERGVAVAPFEELPANPTEEDFKAIAGRLGLPLMLKAKTLAYDGRGNSPLKSASSGDIQASLKFLGDRPLYAEGWAPFVKEVAVMVVRNKEGEVRSYDAVETIHRESILRVCLAPLRGEKGVNQRARELAEKAVGHLEGAGIFGVEMFLMPDGELLLNEIAPRPHNSGHHTIEACLTSQFENHLRAILSLPLGSTALRVPSAAMVNILGASSTMDAIDKMADNALTVPGAAVHLYGKAESRKARKMGHITVTAESDAELNERLRALLFAQPDAHADWIDLIAPPSPAPAHSHAKPLVGIIMGSDSDLPVMHPATKILEKFGVPYELTITSAHRTPERMVKYAKTAADRGLRAIIAGAGGAAHLPGMVASETSLPVIGVPVKASVLDGVDSLYSIVQMPRGIPCATVGINNSTNAALLAVRILGTSVPALNKATEEYSKALEEEVLAKADILEEEGWDKYIERLKK.

The 192-residue stretch at 114-305 folds into the ATP-grasp domain; sequence KKYLAERGVA…QFENHLRAIL (192 aa). 143 to 200 contacts ATP; the sequence is AGRLGLPLMLKAKTLAYDGRGNSPLKSASSGDIQASLKFLGDRPLYAEGWAPFVKEVA.

The protein in the C-terminal section; belongs to the AIR carboxylase family. Class I subfamily.

It catalyses the reaction 5-amino-1-(5-phospho-D-ribosyl)imidazole-4-carboxylate + H(+) = 5-amino-1-(5-phospho-beta-D-ribosyl)imidazole + CO2. It participates in purine metabolism; IMP biosynthesis via de novo pathway; 5-amino-1-(5-phospho-D-ribosyl)imidazole-4-carboxylate from 5-amino-1-(5-phospho-D-ribosyl)imidazole (carboxylase route): step 1/1. In Cryptococcus neoformans var. neoformans serotype D (strain JEC21 / ATCC MYA-565) (Filobasidiella neoformans), this protein is Phosphoribosylaminoimidazole carboxylase (ADE2).